The chain runs to 273 residues: Undecaprenyl-diphosphatase (273 aa).

The next 7 membrane-spanning stretches (helical) occupy residues 45 to 65, 90 to 110, 116 to 136, 154 to 173, 190 to 210, 222 to 242, and 252 to 272; these read AKTF…VMFW, LTLI…LIFH, LFNP…LIAA, YRQA…PGFS, YAAS…ATAL, ADFP…LVAI, and ISFI…YVVF.

The protein belongs to the UppP family.

It localises to the cell inner membrane. It catalyses the reaction di-trans,octa-cis-undecaprenyl diphosphate + H2O = di-trans,octa-cis-undecaprenyl phosphate + phosphate + H(+). Catalyzes the dephosphorylation of undecaprenyl diphosphate (UPP). Confers resistance to bacitracin. The chain is Undecaprenyl-diphosphatase from Enterobacter sp. (strain 638).